We begin with the raw amino-acid sequence, 1383 residues long: DNA-directed RNA polymerase subunit beta (1383 aa).

This sequence belongs to the RNA polymerase beta chain family. The RNAP catalytic core consists of 2 alpha, 1 beta, 1 beta' and 1 omega subunit. When a sigma factor is associated with the core the holoenzyme is formed, which can initiate transcription.

The enzyme catalyses RNA(n) + a ribonucleoside 5'-triphosphate = RNA(n+1) + diphosphate. In terms of biological role, DNA-dependent RNA polymerase catalyzes the transcription of DNA into RNA using the four ribonucleoside triphosphates as substrates. This Bartonella tribocorum (strain CIP 105476 / IBS 506) protein is DNA-directed RNA polymerase subunit beta.